The primary structure comprises 434 residues: Histidinol dehydrogenase (434 aa).

Residues E260 and H263 each coordinate Zn(2+). Catalysis depends on proton acceptor residues E330 and H331. Residue H423 participates in Zn(2+) binding.

This sequence belongs to the histidinol dehydrogenase family. Requires Zn(2+) as cofactor.

It carries out the reaction L-histidinol + 2 NAD(+) + H2O = L-histidine + 2 NADH + 3 H(+). Its pathway is amino-acid biosynthesis; L-histidine biosynthesis; L-histidine from 5-phospho-alpha-D-ribose 1-diphosphate: step 9/9. In terms of biological role, catalyzes the sequential NAD-dependent oxidations of L-histidinol to L-histidinaldehyde and then to L-histidine. This is Histidinol dehydrogenase (hisD) from Synechocystis sp. (strain ATCC 27184 / PCC 6803 / Kazusa).